Consider the following 279-residue polypeptide: Putative carbamate hydrolase RutD (279 aa).

An AB hydrolase-1 domain is found at proline 23–isoleucine 126.

Belongs to the AB hydrolase superfamily. Hydrolase RutD family.

It carries out the reaction carbamate + 2 H(+) = NH4(+) + CO2. Involved in pyrimidine catabolism. May facilitate the hydrolysis of carbamate, a reaction that can also occur spontaneously. The polypeptide is Putative carbamate hydrolase RutD (Escherichia coli O17:K52:H18 (strain UMN026 / ExPEC)).